A 44-amino-acid polypeptide reads, in one-letter code: Photosystem I reaction center subunit IX (44 aa).

The helical transmembrane segment at 7–27 threads the bilayer; sequence YLSVAPVLATLWFGSLAGLLI.

Belongs to the PsaJ family.

It is found in the plastid. The protein localises to the chloroplast thylakoid membrane. May help in the organization of the PsaE and PsaF subunits. The chain is Photosystem I reaction center subunit IX from Piper cenocladum (Ant piper).